A 142-amino-acid polypeptide reads, in one-letter code: Large ribosomal subunit protein uL11 (142 aa).

It belongs to the universal ribosomal protein uL11 family. In terms of assembly, part of the ribosomal stalk of the 50S ribosomal subunit. Interacts with L10 and the large rRNA to form the base of the stalk. L10 forms an elongated spine to which L12 dimers bind in a sequential fashion forming a multimeric L10(L12)X complex. One or more lysine residues are methylated.

In terms of biological role, forms part of the ribosomal stalk which helps the ribosome interact with GTP-bound translation factors. This is Large ribosomal subunit protein uL11 from Shewanella sediminis (strain HAW-EB3).